A 245-amino-acid polypeptide reads, in one-letter code: Orotidine 5'-phosphate decarboxylase (245 aa).

Residues D22, K44, 71 to 80 (DLKFHDIPNT), T131, R192, Q201, G221, and R222 each bind substrate. The active-site Proton donor is K73.

This sequence belongs to the OMP decarboxylase family. Type 1 subfamily. In terms of assembly, homodimer.

It carries out the reaction orotidine 5'-phosphate + H(+) = UMP + CO2. It participates in pyrimidine metabolism; UMP biosynthesis via de novo pathway; UMP from orotate: step 2/2. In terms of biological role, catalyzes the decarboxylation of orotidine 5'-monophosphate (OMP) to uridine 5'-monophosphate (UMP). In Yersinia pseudotuberculosis serotype O:3 (strain YPIII), this protein is Orotidine 5'-phosphate decarboxylase.